The primary structure comprises 289 residues: Enoyl-CoA hydratase domain-containing protein 3, mitochondrial (289 aa).

The N-terminal 14 residues, 1-14 (MLLRGFSELLKCRG), are a transit peptide targeting the mitochondrion.

The protein belongs to the enoyl-CoA hydratase/isomerase family.

It localises to the mitochondrion. Functionally, may play a role in fatty acid biosynthesis and insulin sensitivity. This is Enoyl-CoA hydratase domain-containing protein 3, mitochondrial (echdc3) from Danio rerio (Zebrafish).